The following is a 240-amino-acid chain: Uridylate kinase (240 aa).

ATP is bound at residue 13-16 (KASG). Positions 21–26 (GGQGFG) are involved in allosteric activation by GTP. Position 55 (Gly55) interacts with UMP. ATP-binding residues include Gly56 and Arg60. Residues Asp75 and 136-143 (TGNPFFTT) each bind UMP. ATP contacts are provided by Thr163, Gln164, Tyr169, and Asp172.

It belongs to the UMP kinase family. Homohexamer.

It localises to the cytoplasm. The enzyme catalyses UMP + ATP = UDP + ADP. It functions in the pathway pyrimidine metabolism; CTP biosynthesis via de novo pathway; UDP from UMP (UMPK route): step 1/1. Allosterically activated by GTP. Inhibited by UTP. Its function is as follows. Catalyzes the reversible phosphorylation of UMP to UDP. The polypeptide is Uridylate kinase (Rhizobium johnstonii (strain DSM 114642 / LMG 32736 / 3841) (Rhizobium leguminosarum bv. viciae)).